Here is a 145-residue protein sequence, read N- to C-terminus: Putative pre-16S rRNA nuclease (145 aa).

It belongs to the YqgF nuclease family.

The protein localises to the cytoplasm. Could be a nuclease involved in processing of the 5'-end of pre-16S rRNA. This Pseudomonas fluorescens (strain ATCC BAA-477 / NRRL B-23932 / Pf-5) protein is Putative pre-16S rRNA nuclease.